The chain runs to 631 residues: Eukaryotic translation initiation factor 3 subunit L (631 aa).

The region spanning 335–526 (TFVSVLIFFI…AETTLLDGER (192 aa)) is the PCI domain. The disordered stretch occupies residues 571–631 (KSAPLPVRKP…PKSRQARIAA (61 aa)). A compositionally biased stretch (low complexity) spans 580 to 612 (PASSSAPAPATTAAPISKSGESAAPAPAEAPAA).

It belongs to the eIF-3 subunit L family. Component of the eukaryotic translation initiation factor 3 (eIF-3) complex.

The protein localises to the cytoplasm. In terms of biological role, component of the eukaryotic translation initiation factor 3 (eIF-3) complex, which is involved in protein synthesis of a specialized repertoire of mRNAs and, together with other initiation factors, stimulates binding of mRNA and methionyl-tRNAi to the 40S ribosome. The eIF-3 complex specifically targets and initiates translation of a subset of mRNAs involved in cell proliferation. The chain is Eukaryotic translation initiation factor 3 subunit L from Cryptococcus neoformans var. neoformans serotype D (strain B-3501A) (Filobasidiella neoformans).